Consider the following 292-residue polypeptide: Probable ABC transporter permease protein PH1215 (292 aa).

6 helical membrane passes run 10-30 (IILF…FAVV), 72-92 (LLLI…LAIL), 106-126 (IYVL…AWMY), 160-180 (IIIA…LAGI), 215-235 (LSAF…IWVL), and 261-281 (FAYG…VVLP). Residues 68–284 (LRNNLLLILL…ALVVVLPYLY (217 aa)) form the ABC transmembrane type-1 domain.

The protein belongs to the binding-protein-dependent transport system permease family. MalFG subfamily.

The protein localises to the cell membrane. Its function is as follows. Probably part of a binding-protein-dependent transport system PH1214/15/16. Probably responsible for the translocation of the substrate across the membrane. The protein is Probable ABC transporter permease protein PH1215 of Pyrococcus horikoshii (strain ATCC 700860 / DSM 12428 / JCM 9974 / NBRC 100139 / OT-3).